The chain runs to 296 residues: Glycine--tRNA ligase alpha subunit (296 aa).

Belongs to the class-II aminoacyl-tRNA synthetase family. In terms of assembly, tetramer of two alpha and two beta subunits.

The protein localises to the cytoplasm. It carries out the reaction tRNA(Gly) + glycine + ATP = glycyl-tRNA(Gly) + AMP + diphosphate. The sequence is that of Glycine--tRNA ligase alpha subunit from Synechococcus sp. (strain WH7803).